Reading from the N-terminus, the 457-residue chain is Reticulon-like protein B18 (457 aa).

Positions 94-183 (AAVTARRSKT…SPSSDQPQDV (90 aa)) are disordered. The span at 124 to 136 (LRSEAMVDTKENT) shows a compositional bias: basic and acidic residues. The span at 149–163 (NQRKQKKLGRSKKEK) shows a compositional bias: basic residues. The segment covering 166–183 (SVPLLASPSPSSDQPQDV) has biased composition (low complexity). Positions 195-385 (ISDLIMWRDV…AFWNLTSLKT (191 aa)) constitute a Reticulon domain. Transmembrane regions (helical) follow at residues 208–228 (TLWF…AKGF), 230–250 (FSVF…SFLS), 314–334 (YGYL…SFTI), and 377–397 (FWNL…VVVI). A disordered region spans residues 407–457 (DSEDEEEKKQQEKTHPEQQKSPEDKSTSPRSAEEEQALVLVAETKAPKKLY). The segment covering 413–439 (EKKQQEKTHPEQQKSPEDKSTSPRSAE) has biased composition (basic and acidic residues).

The protein resides in the endoplasmic reticulum membrane. The sequence is that of Reticulon-like protein B18 (RTNLB18) from Arabidopsis thaliana (Mouse-ear cress).